A 599-amino-acid polypeptide reads, in one-letter code: UvrABC system protein C (599 aa).

In terms of domain architecture, GIY-YIG spans 13–91; that stretch reads NLPGVYRMIN…IKGFMPRYNV (79 aa). The region spanning 200 to 235 is the UVR domain; the sequence is QQVMDELGEKMNEAAEKMEYELAAVYRDRIQSLRQV.

This sequence belongs to the UvrC family. In terms of assembly, interacts with UvrB in an incision complex.

The protein resides in the cytoplasm. Functionally, the UvrABC repair system catalyzes the recognition and processing of DNA lesions. UvrC both incises the 5' and 3' sides of the lesion. The N-terminal half is responsible for the 3' incision and the C-terminal half is responsible for the 5' incision. The sequence is that of UvrABC system protein C from Methylobacillus flagellatus (strain ATCC 51484 / DSM 6875 / VKM B-1610 / KT).